Here is a 100-residue protein sequence, read N- to C-terminus: Small ribosomal subunit protein uS14c (100 aa).

This sequence belongs to the universal ribosomal protein uS14 family. As to quaternary structure, component of the chloroplast small ribosomal subunit (SSU). Mature 70S chloroplast ribosomes of higher plants consist of a small (30S) and a large (50S) subunit. The 30S small subunit contains 1 molecule of ribosomal RNA (16S rRNA) and 24 different proteins. The 50S large subunit contains 3 rRNA molecules (23S, 5S and 4.5S rRNA) and 33 different proteins.

Its subcellular location is the plastid. The protein resides in the chloroplast. Functionally, component of the chloroplast ribosome (chloro-ribosome), a dedicated translation machinery responsible for the synthesis of chloroplast genome-encoded proteins, including proteins of the transcription and translation machinery and components of the photosynthetic apparatus. The polypeptide is Small ribosomal subunit protein uS14c (Spinacia oleracea (Spinach)).